Here is a 332-residue protein sequence, read N- to C-terminus: Small ribosomal subunit protein uS2 (332 aa).

This sequence belongs to the universal ribosomal protein uS2 family.

This Nitrobacter winogradskyi (strain ATCC 25391 / DSM 10237 / CIP 104748 / NCIMB 11846 / Nb-255) protein is Small ribosomal subunit protein uS2.